We begin with the raw amino-acid sequence, 201 residues long: Desiccation-related protein PCC3-06 (201 aa).

The span at 41–54 (TVASQSQGRQQVSE) shows a compositional bias: polar residues. Disordered stretches follow at residues 41-155 (TVAS…QNVK) and 177-201 (MGKS…TNYF). Composition is skewed to basic and acidic residues over residues 57–76 (EDAK…KTSE), 108–144 (GELK…ERVA), and 177–193 (MGKS…ETKK).

It belongs to the LEA type 1 family.

This is Desiccation-related protein PCC3-06 from Craterostigma plantagineum (Blue gem).